Reading from the N-terminus, the 805-residue chain is Zinc finger CCCH domain-containing protein 11B (805 aa).

2 C3H1-type zinc fingers span residues 2 to 29 (PNQG…HCEA) and 31 to 57 (LGNE…HMEI). 6 disordered regions span residues 140–194 (KVES…GLRV), 223–351 (KKMK…DKVN), 364–433 (MLLE…TCIK), 449–468 (IVAS…SMQE), 481–506 (KALR…PGAR), and 715–805 (VTVP…PLEL). Residues 160 to 175 (ADDDEDDDDQFSEEGD) show a composition bias toward acidic residues. Residues 364–390 (MLLERASQKHGESQTKLKTEGPSKTDD) show a composition bias toward basic and acidic residues. Residues 391–402 (STSGARSSSTIR) show a composition bias toward polar residues. Residues 403 to 423 (IKTFSEVLAEEEHRQQEAERQ) are a coiled coil. Basic and acidic residues-rich tracts occupy residues 412–433 (EEEH…TCIK) and 455–468 (QSEE…SMQE). Composition is skewed to low complexity over residues 486–498 (QQSS…SPSQ) and 730–749 (PPTQ…PSSS). The span at 750 to 763 (QMSMKTRRLSSAST) shows a compositional bias: polar residues. The span at 789-805 (EIDLDPGKDEDDLPLEL) shows a compositional bias: acidic residues.

May play a role in mRNA transport. The protein is Zinc finger CCCH domain-containing protein 11B of Homo sapiens (Human).